Consider the following 220-residue polypeptide: MTQLTREQVLELFHQRSSTRYYDPTKKISDEDFECILECGRLSPSSVGSEPWKFLVIQNKTLREKMKPFSWGMINQLDNCSHLVVILAKKNARYDSPFFVDVMARKGLNAEQQQAALTKYKALQEEDMKLLENDRTLFDWCSKQTYIALANMLTGASALGIDSCPIEGFHYDKMNECLAEEGLFDPQEYAVSVAATFGYRSRDIAKKSRKGLDEVVKWVG.

155–160 (GASALG) provides a ligand contact to NAD(+).

This sequence belongs to the nitroreductase family. FMN is required as a cofactor.

The polypeptide is Putative NAD(P)H nitroreductase (Haemophilus influenzae (strain ATCC 51907 / DSM 11121 / KW20 / Rd)).